The primary structure comprises 357 residues: Protein XRP2 (357 aa).

The segment covering 1 to 11 (MGCFFSKRRKP) has biased composition (basic residues). The disordered stretch occupies residues 1–39 (MGCFFSKRRKPAQGGQQQGASQEPAAGEEKAPQYSWDQR). A lipid anchor (N-myristoyl glycine) is attached at Gly2. Cys3 carries the S-palmitoyl cysteine lipid modification. Low complexity predominate over residues 12–25 (AQGGQQQGASQEPA). Positions 32 to 186 (PQYSWDQRAK…TWSNIHDFTP (155 aa)) constitute a C-CAP/cofactor C-like domain. GTP-binding positions include 105 to 106 (GS) and 122 to 125 (QQFR).

The protein belongs to the TBCC family. Post-translationally, myristoylated on Gly-2; which may be required for membrane targeting. Palmitoylated on Cys-3; which may be required for plasma membrane targeting.

The protein resides in the cell membrane. In terms of biological role, acts as a GTPase-activating protein (GAP) for tubulin in concert with tubulin-specific chaperone C, but does not enhance tubulin heterodimerization. Acts as a GTPase-activating protein. May act as guanine nucleotide dissociation inhibitor towards ADP-ribosylation factor-like proteins. The polypeptide is Protein XRP2 (RP2) (Gallus gallus (Chicken)).